The primary structure comprises 286 residues: 33 kDa chaperonin (286 aa).

Intrachain disulfides connect Cys-233–Cys-235 and Cys-267–Cys-270.

Belongs to the HSP33 family. Under oxidizing conditions two disulfide bonds are formed involving the reactive cysteines. Under reducing conditions zinc is bound to the reactive cysteines and the protein is inactive.

The protein localises to the cytoplasm. Functionally, redox regulated molecular chaperone. Protects both thermally unfolding and oxidatively damaged proteins from irreversible aggregation. Plays an important role in the bacterial defense system toward oxidative stress. This Histophilus somni (strain 129Pt) (Haemophilus somnus) protein is 33 kDa chaperonin.